Reading from the N-terminus, the 699-residue chain is D-(-)-3-hydroxybutyrate oligomer hydrolase (699 aa).

The signal sequence occupies residues M1–A33. Catalysis depends on S311, which acts as the Charge relay system.

The protein belongs to the D-(-)-3-hydroxybutyrate oligomer hydrolase family.

It is found in the secreted. The catalysed reaction is (3R)-hydroxybutanoate dimer + H2O = 2 (R)-3-hydroxybutanoate + H(+). The protein operates within lipid metabolism; butanoate metabolism. Participates in the degradation of poly-3-hydroxybutyrate (PHB). It works downstream of poly(3-hydroxybutyrate) depolymerase, hydrolyzing D(-)-3-hydroxybutyrate oligomers of various length (3HB-oligomers) into 3HB-monomers. The polypeptide is D-(-)-3-hydroxybutyrate oligomer hydrolase (Burkholderia mallei (strain ATCC 23344)).